Reading from the N-terminus, the 73-residue chain is Ferredoxin-thioredoxin reductase, variable chain (73 aa).

Residues 43–46 form an interaction with ferredoxin region; the sequence is NGKP.

Belongs to the ferredoxin thioredoxin reductase alpha subunit family. Heterodimer of subunit A (variable subunit) and subunit B (catalytic subunit). Heterodimeric FTR forms a complex with ferredoxin and thioredoxin.

In terms of biological role, variable subunit of the ferredoxin-thioredoxin reductase (FTR), which catalyzes the two-electron reduction of thioredoxins by the electrons provided by reduced ferredoxin. This is Ferredoxin-thioredoxin reductase, variable chain (ftrV) from Synechococcus sp. (strain ATCC 27144 / PCC 6301 / SAUG 1402/1) (Anacystis nidulans).